The primary structure comprises 478 residues: Kynurenine 3-monooxygenase (478 aa).

Residues Val-19, Tyr-37–Arg-40, and Ala-57 contribute to the FAD site. L-kynurenine-binding residues include Arg-85 and Tyr-99. FAD-binding positions include Arg-111, Leu-136, Thr-172, Asp-304, and Met-317–Asn-318. L-kynurenine is bound by residues Asn-363 and Tyr-398. 2 consecutive transmembrane segments (helical) span residues Phe-385–Thr-404 and Gly-425–Leu-445.

This sequence belongs to the aromatic-ring hydroxylase family. KMO subfamily. FAD is required as a cofactor. As to expression, highest activity in liver and kidney. Low activity in spleen, stomach, intestinal tract, esophagus, heart and lung.

It is found in the mitochondrion outer membrane. It catalyses the reaction L-kynurenine + NADPH + O2 + H(+) = 3-hydroxy-L-kynurenine + NADP(+) + H2O. It functions in the pathway cofactor biosynthesis; NAD(+) biosynthesis; quinolinate from L-kynurenine: step 1/3. In terms of biological role, catalyzes the hydroxylation of L-kynurenine (L-Kyn) to form 3-hydroxy-L-kynurenine (L-3OHKyn). Required for synthesis of quinolinic acid, a neurotoxic NMDA receptor antagonist and potential endogenous inhibitor of NMDA receptor signaling in axonal targeting, synaptogenesis and apoptosis during brain development. Quinolinic acid may also affect NMDA receptor signaling in pancreatic beta cells, osteoblasts, myocardial cells, and the gastrointestinal tract. The polypeptide is Kynurenine 3-monooxygenase (Rattus norvegicus (Rat)).